Reading from the N-terminus, the 247-residue chain is Probable transcriptional regulatory protein DVU_2259 (247 aa).

Positions 1-22 (MAGHSKWANIQHRKGRQDAKRG) are disordered.

Belongs to the TACO1 family.

It is found in the cytoplasm. This Nitratidesulfovibrio vulgaris (strain ATCC 29579 / DSM 644 / CCUG 34227 / NCIMB 8303 / VKM B-1760 / Hildenborough) (Desulfovibrio vulgaris) protein is Probable transcriptional regulatory protein DVU_2259.